The chain runs to 143 residues: uncharacterized protein (143 aa).

It belongs to the SufE family.

This is an uncharacterized protein from Mycobacterium tuberculosis (strain CDC 1551 / Oshkosh).